The chain runs to 266 residues: Very-long-chain aldehyde decarbonylase GL1-11 (266 aa).

4 consecutive transmembrane segments (helical) span residues 25–45, 74–94, 106–126, and 163–183; these read VVTF…SLLF, ILYH…AFKF, WTVI…IFYW, and ILFL…HLFT. Residues 113–248 enclose the Fatty acid hydroxylase domain; it reads VLFYFVLEDF…FVYMDWLFGT (136 aa).

Belongs to the sterol desaturase family. Homodimer.

It localises to the endoplasmic reticulum membrane. It catalyses the reaction a long-chain fatty aldehyde + 2 NADPH + O2 + H(+) = a long-chain alkane + formate + 2 NADP(+) + H2O. Functionally, aldehyde decarbonylase involved in the conversion of aldehydes to alkanes. Core component of a very-long-chain alkane synthesis complex. The chain is Very-long-chain aldehyde decarbonylase GL1-11 from Oryza sativa subsp. indica (Rice).